Reading from the N-terminus, the 343-residue chain is MTLKGKKVTVHDMTLRDGMHPKRHLMTLDQMTAIATGLDAAGVPLIEVTHGDGLGGSSVNYGFPAHTDEEYLGAVIPKMKNAKVSALLLPGIGTVDHLKMARDLGVHTIRVATHCTEADVSEQHITMARKLEMDTVGFLMMAHMNSAEGLVKQAKLMESYGANCIYVTDSAGHLLPEGVKERLSAVRAALKPETELGFHGHHNLAMGVANSIAAIEVGANRIDAAAAGLGAGAGNTPMEVLIAVCSLMGIETGVDVAKITDVAEDLVVPMMDFPIRIDRDALTLGYAGVYGSFLLFAKRASAKYGVPARDILVELGRRGMVGGQEDMIEDTAITMARERGLLK.

In terms of domain architecture, Pyruvate carboxyltransferase spans 8–260; sequence VTVHDMTLRD…ETGVDVAKIT (253 aa). 16-17 is a binding site for substrate; the sequence is RD. Asp17 serves as a coordination point for Mn(2+). His20 serves as the catalytic Proton acceptor. The substrate site is built by Ser170 and His199. Positions 199 and 201 each coordinate Mn(2+). Tyr290 provides a ligand contact to substrate.

It belongs to the 4-hydroxy-2-oxovalerate aldolase family.

The enzyme catalyses (S)-4-hydroxy-2-oxopentanoate = acetaldehyde + pyruvate. This is 4-hydroxy-2-oxovalerate aldolase 4 from Dechloromonas aromatica (strain RCB).